Here is a 336-residue protein sequence, read N- to C-terminus: Casein kinase II subunit alpha (336 aa).

Residues 32-317 (YEVVRKIGRG…AKEAMAHPYF (286 aa)) enclose the Protein kinase domain. Residues 38–46 (IGRGKYSEV) and K61 each bind ATP. D149 serves as the catalytic Proton acceptor.

It belongs to the protein kinase superfamily. Ser/Thr protein kinase family. CK2 subfamily. As to quaternary structure, tetramer composed of two alpha chains, one beta chain and one beta' chain.

The catalysed reaction is L-seryl-[protein] + ATP = O-phospho-L-seryl-[protein] + ADP + H(+). It carries out the reaction L-threonyl-[protein] + ATP = O-phospho-L-threonyl-[protein] + ADP + H(+). Its function is as follows. Catalytic subunit of a constitutively active serine/threonine-protein kinase complex that phosphorylates a large number of substrates containing acidic residues C-terminal to the phosphorylated serine or threonine. Phosphorylates the frq clock protein thus regulating the circadian clock. This is Casein kinase II subunit alpha (cka) from Neurospora crassa (strain ATCC 24698 / 74-OR23-1A / CBS 708.71 / DSM 1257 / FGSC 987).